Reading from the N-terminus, the 360-residue chain is Peptide chain release factor 1 (360 aa).

Position 234 is an N5-methylglutamine (Gln-234). The interval 285-305 is disordered; the sequence is RAQGIAEDRKSQVGTGDRSER.

The protein belongs to the prokaryotic/mitochondrial release factor family. Post-translationally, methylated by PrmC. Methylation increases the termination efficiency of RF1.

It is found in the cytoplasm. Its function is as follows. Peptide chain release factor 1 directs the termination of translation in response to the peptide chain termination codons UAG and UAA. The sequence is that of Peptide chain release factor 1 from Clostridium beijerinckii (strain ATCC 51743 / NCIMB 8052) (Clostridium acetobutylicum).